Reading from the N-terminus, the 1198-residue chain is Regulator of G-protein signaling 3 (1198 aa).

The C2 domain maps to G137–Y256. The PDZ domain maps to K299–V376. R448 bears the Omega-N-methylarginine mark. The disordered stretch occupies residues Q669–V933. The residue at position 674 (S674) is a Phosphoserine. Residues K679 to K697 show a composition bias toward basic and acidic residues. Positions E739–G751 are enriched in polar residues. The segment covering P753–A773 has biased composition (pro residues). Over residues G877 to N906 the composition is skewed to acidic residues. Basic and acidic residues predominate over residues Y907–S917. A phosphoserine mark is found at S943, S946, S978, and S1007. Disordered stretches follow at residues S1007–N1026 and K1032–M1056. The RGS domain maps to S1073–L1198.

In terms of assembly, binds EFNB1 and EFNB2. Binds the GNB1-GNG2 heterodimer. Post-translationally, phosphorylated by cyclic GMP-dependent protein kinase. ISGylated.

Its subcellular location is the cytoplasm. It is found in the nucleus. The protein resides in the cell membrane. Its function is as follows. Down-regulates signaling from heterotrimeric G-proteins by increasing the GTPase activity of the alpha subunits, thereby driving them into their inactive GDP-bound form. Down-regulates G-protein-mediated release of inositol phosphates and activation of MAP kinases. The sequence is that of Regulator of G-protein signaling 3 (RGS3) from Homo sapiens (Human).